The chain runs to 202 residues: Inosine triphosphate pyrophosphatase (202 aa).

8–13 (TGNANK) is an ITP binding site. Glu-55 lines the Mg(2+) pocket. ITP-binding positions include Lys-67, 83–84 (DT), Lys-100, 159–162 (FGWD), Lys-182, and 187–188 (HR).

This sequence belongs to the HAM1 NTPase family. As to quaternary structure, homodimer. The cofactor is Mg(2+). Requires Mn(2+) as cofactor.

It is found in the cytoplasm. The protein resides in the nucleus. It carries out the reaction ITP + H2O = IMP + diphosphate + H(+). It catalyses the reaction dITP + H2O = dIMP + diphosphate + H(+). The catalysed reaction is XTP + H2O = XMP + diphosphate + H(+). Its function is as follows. Pyrophosphatase that hydrolyzes non-canonical purine nucleotides such as inosine triphosphate (ITP), deoxyinosine triphosphate (dITP) or xanthosine 5'-triphosphate (XTP) to their respective monophosphate derivatives. The enzyme does not distinguish between the deoxy- and ribose forms. Probably excludes non-canonical purines from RNA and DNA precursor pools, thus preventing their incorporation into RNA and DNA and avoiding chromosomal lesions. The polypeptide is Inosine triphosphate pyrophosphatase (Candida albicans (strain SC5314 / ATCC MYA-2876) (Yeast)).